The chain runs to 611 residues: Threonine--tRNA ligase (611 aa).

The editing domain stretch occupies residues 1 to 145 (MRLLLIHSDH…TILPGEGAAA (145 aa)). The tract at residues 195-487 (VHVDLMRAKE…TAAQEVPSFP (293 aa)) is catalytic. 3 residues coordinate Zn(2+): Cys287, His339, and His460.

It belongs to the class-II aminoacyl-tRNA synthetase family. As to quaternary structure, homodimer. Requires Zn(2+) as cofactor.

The protein resides in the cytoplasm. The catalysed reaction is tRNA(Thr) + L-threonine + ATP = L-threonyl-tRNA(Thr) + AMP + diphosphate + H(+). Functionally, catalyzes the attachment of threonine to tRNA(Thr) in a two-step reaction: L-threonine is first activated by ATP to form Thr-AMP and then transferred to the acceptor end of tRNA(Thr). Also edits incorrectly charged L-seryl-tRNA(Thr). This is Threonine--tRNA ligase from Methanoculleus marisnigri (strain ATCC 35101 / DSM 1498 / JR1).